The chain runs to 343 residues: Heat-inducible transcription repressor HrcA (343 aa).

The protein belongs to the HrcA family.

Functionally, negative regulator of class I heat shock genes (grpE-dnaK-dnaJ and groELS operons). Prevents heat-shock induction of these operons. This Thermoanaerobacter pseudethanolicus (strain ATCC 33223 / 39E) (Clostridium thermohydrosulfuricum) protein is Heat-inducible transcription repressor HrcA.